The chain runs to 388 residues: NADH-quinone oxidoreductase subunit D 2 (388 aa).

Belongs to the complex I 49 kDa subunit family. As to quaternary structure, NDH-1 is composed of 14 different subunits. Subunits NuoB, C, D, E, F, and G constitute the peripheral sector of the complex.

The protein resides in the cell inner membrane. It catalyses the reaction a quinone + NADH + 5 H(+)(in) = a quinol + NAD(+) + 4 H(+)(out). Functionally, NDH-1 shuttles electrons from NADH, via FMN and iron-sulfur (Fe-S) centers, to quinones in the respiratory chain. The immediate electron acceptor for the enzyme in this species is believed to be ubiquinone. Couples the redox reaction to proton translocation (for every two electrons transferred, four hydrogen ions are translocated across the cytoplasmic membrane), and thus conserves the redox energy in a proton gradient. The chain is NADH-quinone oxidoreductase subunit D 2 from Sorangium cellulosum (strain So ce56) (Polyangium cellulosum (strain So ce56)).